Here is a 165-residue protein sequence, read N- to C-terminus: V-type proton ATPase 16 kDa proteolipid subunit (165 aa).

Over 1–10 (MPSTFSGDET) the chain is Lumenal. Residues 11–33 (APFFGFLGAAAALVFSCMGAAYG) traverse the membrane as a helical segment. The Cytoplasmic portion of the chain corresponds to 34–55 (TAKSGVGVASMGVMRPELVMKS). Residues 56 to 76 (IVPVVMAGVLGIYGLIIAVII) traverse the membrane as a helical segment. Residues 77 to 95 (STGINPKTKSYYLFDGYAH) lie on the Lumenal side of the membrane. Residues 96–117 (LSSGLACGLAGLSAGMAIGIVG) form a helical membrane-spanning segment. The Cytoplasmic portion of the chain corresponds to 118–129 (DAGVRANAQQPK). Residues 130–155 (LFVGMILILIFAEALALYGLIVGIIL) form a helical membrane-spanning segment. Residues 156-165 (SSRAGQSRAE) are Lumenal-facing.

It belongs to the V-ATPase proteolipid subunit family. As to quaternary structure, V-ATPase is a heteromultimeric enzyme composed of a peripheral catalytic V1 complex (main components: subunits A, B, C, D, E, and F) attached to an integral membrane V0 proton pore complex (main component: the proteolipid protein; which is present as a hexamer that forms the proton-conducting pore).

It localises to the vacuole membrane. Functionally, proton-conducting pore forming subunit of the membrane integral V0 complex of vacuolar ATPase. V-ATPase is responsible for acidifying a variety of intracellular compartments in eukaryotic cells. The chain is V-type proton ATPase 16 kDa proteolipid subunit from Nicotiana tabacum (Common tobacco).